The following is a 525-amino-acid chain: Putative ribose/galactose/methyl galactoside import ATP-binding protein (525 aa).

Residues 1 to 30 are disordered; that stretch reads MFGSATANPPAQRDLPSSDSDSPTPDAQPP. Over residues 14–25 the composition is skewed to low complexity; sequence DLPSSDSDSPTP. 2 consecutive ABC transporter domains span residues 33–269 and 279–523; these read LEIS…VGRE and KPPG…SGHK. An ATP-binding site is contributed by 65–72; it reads GENGAGKS.

Belongs to the ABC transporter superfamily. Carbohydrate importer 2 (CUT2) (TC 3.A.1.2) family.

Its subcellular location is the cell inner membrane. The catalysed reaction is D-ribose(out) + ATP + H2O = D-ribose(in) + ADP + phosphate + H(+). The enzyme catalyses D-galactose(out) + ATP + H2O = D-galactose(in) + ADP + phosphate + H(+). In terms of biological role, part of an ABC transporter complex involved in carbohydrate import. Could be involved in ribose, galactose and/or methyl galactoside import. Responsible for energy coupling to the transport system. In Pseudomonas savastanoi pv. phaseolicola (strain 1448A / Race 6) (Pseudomonas syringae pv. phaseolicola (strain 1448A / Race 6)), this protein is Putative ribose/galactose/methyl galactoside import ATP-binding protein.